The primary structure comprises 189 residues: Large ribosomal subunit protein eL19A (189 aa).

Lys21 participates in a covalent cross-link: Glycyl lysine isopeptide (Lys-Gly) (interchain with G-Cter in ubiquitin). Phosphoserine occurs at positions 30 and 37. Residues Lys53 and Lys60 each participate in a glycyl lysine isopeptide (Lys-Gly) (interchain with G-Cter in ubiquitin) cross-link. Residues 58 to 85 (HSKSRTRAHAQSKREGRHSGYGKRKGTR) are disordered. The span at 59-68 (SKSRTRAHAQ) shows a compositional bias: basic residues. Residue Ser91 is modified to Phosphoserine. Glycyl lysine isopeptide (Lys-Gly) (interchain with G-Cter in ubiquitin) cross-links involve residues Lys146 and Lys186. A disordered region spans residues 164–189 (LKNRAARDRRAQRVAEKRDALLKEDA).

This sequence belongs to the eukaryotic ribosomal protein eL19 family. Component of the large ribosomal subunit (LSU). Mature yeast ribosomes consist of a small (40S) and a large (60S) subunit. The 40S small subunit contains 1 molecule of ribosomal RNA (18S rRNA) and 33 different proteins (encoded by 57 genes). The large 60S subunit contains 3 rRNA molecules (25S, 5.8S and 5S rRNA) and 46 different proteins (encoded by 81 genes). eL19 lies in close proximity to the binding site for eukaryotic initiation factor eIF4G.

It is found in the cytoplasm. In terms of biological role, component of the ribosome, a large ribonucleoprotein complex responsible for the synthesis of proteins in the cell. The small ribosomal subunit (SSU) binds messenger RNAs (mRNAs) and translates the encoded message by selecting cognate aminoacyl-transfer RNA (tRNA) molecules. The large subunit (LSU) contains the ribosomal catalytic site termed the peptidyl transferase center (PTC), which catalyzes the formation of peptide bonds, thereby polymerizing the amino acids delivered by tRNAs into a polypeptide chain. The nascent polypeptides leave the ribosome through a tunnel in the LSU and interact with protein factors that function in enzymatic processing, targeting, and the membrane insertion of nascent chains at the exit of the ribosomal tunnel. eL19 may play a role in the last stages of translation initiation, in particular subunit joining and shedding/releasing factors. This Saccharomyces cerevisiae (strain ATCC 204508 / S288c) (Baker's yeast) protein is Large ribosomal subunit protein eL19A.